Consider the following 228-residue polypeptide: UPF0173 metal-dependent hydrolase Smar_0891 (228 aa).

Belongs to the UPF0173 family.

This Staphylothermus marinus (strain ATCC 43588 / DSM 3639 / JCM 9404 / F1) protein is UPF0173 metal-dependent hydrolase Smar_0891.